A 347-amino-acid polypeptide reads, in one-letter code: Haptoglobin (347 aa).

An N-terminal signal peptide occupies residues 1–18 (MRALGAVVTLLLWGQLFA). Residues 31–88 (DSCPKPPEIANGYVEHLVRYRCRQFYKLQTEGDGIYTLNSEKQWVNPAAGDKLPKCEA) form the Sushi domain. Intrachain disulfides connect Cys-52–Cys-86, Cys-90–Cys-207, Cys-250–Cys-281, and Cys-292–Cys-322. The Peptidase S1 domain occupies 103-345 (IIGGSMDAKG…LKDWVQETMA (243 aa)). Asn-148 and Asn-152 each carry an N-linked (GlcNAc...) asparagine glycan. Positions 259–264 (VPEKKG) are interaction with CD163.

Belongs to the peptidase S1 family. As to quaternary structure, tetramer of two alpha and two beta chains; disulfide-linked. The hemoglobin/haptoglobin complex is composed of a haptoglobin dimer bound to two hemoglobin alpha-beta dimers. Interacts with CD163. Interacts with ERGIC3. Expressed by the liver and secreted in plasma.

It localises to the secreted. Functionally, as a result of hemolysis, hemoglobin is found to accumulate in the kidney and is secreted in the urine. Haptoglobin captures, and combines with free plasma hemoglobin to allow hepatic recycling of heme iron and to prevent kidney damage. Haptoglobin also acts as an antioxidant, has antibacterial activity and plays a role in modulating many aspects of the acute phase response. Hemoglobin/haptoglobin complexes are rapidly cleared by the macrophage CD163 scavenger receptor expressed on the surface of liver Kupfer cells through an endocytic lysosomal degradation pathway. The protein is Haptoglobin (Hp) of Rattus norvegicus (Rat).